Consider the following 471-residue polypeptide: V-type ATP synthase beta chain (471 aa).

It belongs to the ATPase alpha/beta chains family.

Functionally, produces ATP from ADP in the presence of a proton gradient across the membrane. The V-type beta chain is a regulatory subunit. The polypeptide is V-type ATP synthase beta chain (Streptococcus pyogenes serotype M12 (strain MGAS2096)).